Here is a 261-residue protein sequence, read N- to C-terminus: Hemin import ATP-binding protein HmuV (261 aa).

Residues 5–241 (YTAENLTFTR…DALAHWYGAQ (237 aa)) enclose the ABC transporter domain. 37-44 (GPNGAGKS) is a binding site for ATP.

It belongs to the ABC transporter superfamily. Heme (hemin) importer (TC 3.A.1.14.5) family. As to quaternary structure, the complex is composed of two ATP-binding proteins (HmuV), two transmembrane proteins (HmuU) and a solute-binding protein (HmuT).

The protein localises to the cell inner membrane. Its function is as follows. Part of the ABC transporter complex HmuTUV involved in hemin import. Responsible for energy coupling to the transport system. The chain is Hemin import ATP-binding protein HmuV from Enterobacter cloacae.